Reading from the N-terminus, the 40-residue chain is MANTTGRIPLWLIGTVVGTPVISLVGIFSYGSYSGLGSSL.

The chain crosses the membrane as a helical span at residues 8–28 (IPLWLIGTVVGTPVISLVGIF).

Belongs to the PsbJ family. PSII is composed of 1 copy each of membrane proteins PsbA, PsbB, PsbC, PsbD, PsbE, PsbF, PsbH, PsbI, PsbJ, PsbK, PsbL, PsbM, PsbT, PsbX, PsbY, PsbZ, Psb30/Ycf12, at least 3 peripheral proteins of the oxygen-evolving complex and a large number of cofactors. It forms dimeric complexes.

It localises to the plastid. The protein resides in the chloroplast thylakoid membrane. One of the components of the core complex of photosystem II (PSII). PSII is a light-driven water:plastoquinone oxidoreductase that uses light energy to abstract electrons from H(2)O, generating O(2) and a proton gradient subsequently used for ATP formation. It consists of a core antenna complex that captures photons, and an electron transfer chain that converts photonic excitation into a charge separation. The polypeptide is Photosystem II reaction center protein J (Huperzia lucidula (Shining clubmoss)).